The following is a 79-amino-acid chain: Beta-defensin 15 (79 aa).

An N-terminal signal peptide occupies residues 1 to 20 (MKTFLFLFAVLFFLDPAKNA). 3 cysteine pairs are disulfide-bonded: Cys26–Cys53, Cys33–Cys47, and Cys37–Cys54.

It belongs to the beta-defensin family. Expressed in testis and to a lesser extent in epididymis (caput, corpus and cauda). Also weakly expressed in kidneys and colon.

It localises to the secreted. Functionally, has antibacterial activity. In Mus musculus (Mouse), this protein is Beta-defensin 15 (Defb15).